Consider the following 326-residue polypeptide: Glyoxylate/hydroxypyruvate reductase B (326 aa).

Residues Arg-237 and Glu-266 contribute to the active site. The active-site Proton donor is His-285.

The protein belongs to the D-isomer specific 2-hydroxyacid dehydrogenase family. GhrB subfamily. As to quaternary structure, homodimer.

It localises to the cytoplasm. It carries out the reaction glycolate + NADP(+) = glyoxylate + NADPH + H(+). The enzyme catalyses (R)-glycerate + NAD(+) = 3-hydroxypyruvate + NADH + H(+). It catalyses the reaction (R)-glycerate + NADP(+) = 3-hydroxypyruvate + NADPH + H(+). Its function is as follows. Catalyzes the NADPH-dependent reduction of glyoxylate and hydroxypyruvate into glycolate and glycerate, respectively. This is Glyoxylate/hydroxypyruvate reductase B from Yersinia enterocolitica serotype O:8 / biotype 1B (strain NCTC 13174 / 8081).